The primary structure comprises 955 residues: Calsyntenin-2 (955 aa).

Residues 1–20 form the signal peptide; that stretch reads MLPGRLCWVPLLLALGVGSG. Over 21–831 the chain is Extracellular; the sequence is SGGGGDSRQR…SIQHSSVVPS (811 aa). Cadherin domains are found at residues 44–160 and 161–280; these read IETS…APTF and KEPA…MPLF. 2 N-linked (GlcNAc...) asparagine glycosylation sites follow: N56 and N98. N-linked (GlcNAc...) asparagine glycans are attached at residues N342, N374, N716, and N729. A helical transmembrane segment spans residues 832-852; the sequence is IATVVIIISVCMLVFVVAMGV. Residues 853-955 are Cytoplasmic-facing; it reads YRVRIAHQHF…LEWDDSTLPY (103 aa). Positions 887-955 are disordered; the sequence is PMEKHEGPGH…LEWDDSTLPY (69 aa). Residues 888 to 898 are compositionally biased toward basic and acidic residues; it reads MEKHEGPGHGE. Composition is skewed to acidic residues over residues 899-913 and 920-929; these read DETE…EEEM and DDSEEEEEEE.

Belongs to the calsyntenin family. Post-translationally, proteolytically processed under normal cellular conditions. A primary zeta-cleavage generates a large extracellular (soluble) N-terminal domain (sAlc) and a short C-terminal transmembrane fragment (CTF1). A secondary cleavage catalyzed by gamma-secretase within the transmembrane domain releases the beta-Alc-gamma chain in the extracellular milieu and produces an intracellular fragment (AlcICD). This processing is strongly suppressed in the tripartite complex formed with APBA2 and APP, which seems to prevent the association with PSEN1. Restricted to the brain.

Its subcellular location is the postsynaptic cell membrane. The protein localises to the endoplasmic reticulum membrane. It localises to the golgi apparatus membrane. It is found in the cell projection. The protein resides in the dendrite. Functionally, postsynaptic adhesion molecule that binds to presynaptic neurexins to mediate synapse formation, and which is involved in learning and memory. Promotes synapse development by acting as a cell adhesion molecule at the postsynaptic membrane, which associates with neurexin-alpha at the presynaptic membrane. The sequence is that of Calsyntenin-2 from Homo sapiens (Human).